The primary structure comprises 227 residues: Nudix hydrolase 27, chloroplastic (227 aa).

A chloroplast-targeting transit peptide spans 1–44 (MAVKASGFIGKSAISVHLDFSSFPVKFSCLKQFSVSSPKPLVVL). The 148-residue stretch at 61–208 (GYRKNVGICL…KRPVYEHVIK (148 aa)) folds into the Nudix hydrolase domain. The short motif at 94–115 (GGADEGEDLRNAAFRELREETG) is the Nudix box element. Positions 109 and 113 each coordinate Mn(2+).

Belongs to the Nudix hydrolase family. The cofactor is Mg(2+). Mn(2+) serves as cofactor. Expressed in roots, leaves, stems and inflorescences.

Its subcellular location is the plastid. It is found in the chloroplast. Functionally, mediates the hydrolysis of some nucleoside diphosphate derivatives. Can use diadenosine 5',5'''-P(1)P(5) pentaphosphate (Ap(5)A) as substrates. This chain is Nudix hydrolase 27, chloroplastic (NUDT27), found in Arabidopsis thaliana (Mouse-ear cress).